The primary structure comprises 7096 residues: Replicase polyprotein 1ab (7096 aa).

The tract at residues 1–147 (MESLVPGFNE…ADLKSFDLGD (147 aa)) is disordered. Residues 1–2225 (MESLVPGFNE…NYLKSPNFSK (2225 aa)) are Cytoplasmic-facing. In terms of domain architecture, CoV Nsp1 globular spans 12–127 (THVQLSLPVL…YRKVLLRKNG (116 aa)). In terms of domain architecture, BetaCoV Nsp1 C-terminal spans 148 to 179 (ELGTDPYEDFQENWNTKHSSGVTRELMRELNG). The binding to 40s ribosome mRNA entry channel stretch occupies residues 154–180 (YEDFQENWNTKHSSGVTRELMRELNGG). The CoV Nsp2 N-terminal domain maps to 183–456 (TRYVDNNFCG…NDNLLEILQK (274 aa)). Residues cysteine 200, cysteine 231, histidine 234, histidine 236, cysteine 323, cysteine 326, cysteine 341, cysteine 344, cysteine 370, cysteine 373, histidine 382, and cysteine 416 each coordinate Zn(2+). Positions 200–236 (CIKDLLARAGKASCTLSEQLDFIDTKRGVYCCREHEH) are C2H2. Residues 323-344 (CDHCGETSWQTGDFVKATCEFC) are C4. Positions 370–416 (CPACHNSEVGPEHSLAEYHNESGLKTILRKGGRTIAFGGCVFSYVGC) are C2HC. Residues 458-688 (KVNINIVGDF…FKLVNKFLAL (231 aa)) enclose the CoV Nsp2 middle domain. 2 LRR repeats span residues 545 to 569 (RSIF…AITI) and 697 to 719 (GAKL…LYRK). A CoV Nsp2 C-terminal domain is found at 690-818 (ADSIIIGGAK…TNNTFTLKGG (129 aa)). In terms of domain architecture, Ubiquitin-like 1 spans 821-929 (TKVTFGDDTV…MYCSFYPPDE (109 aa)). The disordered stretch occupies residues 926–999 (PPDEDEEEGD…QQDGSEDNQT (74 aa)). Acidic residues-rich tracts occupy residues 927 to 942 (PDED…EEFE) and 971 to 984 (PEEE…DDDS). Macro domains lie at 1025–1194 (VNSF…LEMK), 1231–1359 (KIKA…LPSI), and 1367–1494 (ILGT…TSSS). The 66-residue stretch at 1496 to 1561 (TPEEHFIETI…TFDNLKTLLS (66 aa)) folds into the DPUP domain. One can recognise a Ubiquitin-like 2 domain in the interval 1565 to 1620 (VRTIKVFTTVDNINLHTQVVDMSMTYGQQFGPTYLDGADVTKIKPHNSHEGKTFYV). Residues 1634 to 1898 (YYHTTDPSFL…CTEIDPKLDN (265 aa)) form the Peptidase C16 domain. Catalysis depends on cysteine 1674, which acts as the For PL-PRO activity. One copy of the LRR 3 repeat lies at 1680-1702 (LLTLQQIELKFNPPALQDAYYRA). The Zn(2+) site is built by cysteine 1752, cysteine 1755, cysteine 1787, and cysteine 1789. The C4-type zinc finger occupies 1752 to 1789 (CKTCGQQQTTLKGVEAVMYMGTLSYEQFKKGVQIPCTC). Catalysis depends on for PL-PRO activity residues histidine 1835 and aspartate 1849. The Nucleic acid-binding domain maps to 1911 to 2021 (PIDLVPNQPY…CLWSTKPVET (111 aa)). The region spanning 2046–2155 (PVSEEVVENP…LNKVVSTTTN (110 aa)) is the G2M domain. Residues 2226 to 2246 (LINIIIWFLLLSVCLGSLIYS) form a helical membrane-spanning segment. Over 2247–2317 (TAALGVLMSN…QITISSFKWD (71 aa)) the chain is Lumenal. Residues 2247 to 2317 (TAALGVLMSN…QITISSFKWD (71 aa)) form the 3Ecto domain. 2 cysteine pairs are disulfide-bonded: cysteine 2263–cysteine 2291 and cysteine 2282–cysteine 2288. Residues 2318 to 2338 (LTAFGLVAEWFLAYILFTRFF) traverse the membrane as a helical segment. The Cytoplasmic portion of the chain corresponds to 2339 to 2775 (YVLGLAAIMQ…VNNWLKQLIK (437 aa)). The Y1 stretch occupies residues 2395–2485 (KSYVHVVDGC…QFKRPINPTD (91 aa)). The region spanning 2395–2763 (KSYVHVVDGC…VTTKIALKGG (369 aa)) is the CoV Nsp3 Y domain. Zn(2+) contacts are provided by histidine 2399, cysteine 2404, cysteine 2409, cysteine 2412, cysteine 2445, histidine 2448, cysteine 2452, and cysteine 2455. The interval 2399-2412 (HVVDGCNSSTCMMC) is ZF1. Residues 2445–2455 (CKLHNWNCVNC) are ZF2. A Y2 region spans residues 2486-2580 (QSSYIVDSVT…LLDQALVSDV (95 aa)). A coV-Y region spans residues 2486–2763 (QSSYIVDSVT…VTTKIALKGG (278 aa)). The tract at residues 2581–2662 (GDSAEVAVKM…ECLKLSHQSD (82 aa)) is Y3. A Y4 region spans residues 2663 to 2763 (IEVTGDSCNN…VTTKIALKGG (101 aa)). The chain crosses the membrane as a helical span at residues 2776–2796 (VTLVFLFVAAIFYLITPVHVM). Over 2797 to 3044 (SKHTDFSSEI…IQPIGALDIS (248 aa)) the chain is Lumenal. A helical transmembrane segment spans residues 3045–3065 (ASIVAGGIVAIVVTCLAYYFM). The Cytoplasmic portion of the chain corresponds to 3066 to 3099 (RFRRAFGEYSHVVAFNTLLFLMSFTVLCLTPVYS). Residues 3100-3120 (FLPGVYSVIYLYLTFYLTNDV) form a helical membrane-spanning segment. Topologically, residues 3121 to 3127 (SFLAHIQ) are lumenal. The chain crosses the membrane as a helical span at residues 3128–3148 (WMVMFTPLVPFWITIAYIICI). The Cytoplasmic portion of the chain corresponds to 3149 to 3586 (STKHFYWFFS…KGTHHWLLLT (438 aa)). In terms of domain architecture, Nsp4C spans 3165–3263 (VVFNGVSFST…QTSITSAVLQ (99 aa)). The stretch at 3185-3206 (LNKEMYLKLRSDVLLPLTQYNR) is one LRR 4 repeat. One can recognise a Peptidase C30 domain in the interval 3264-3569 (SGFRKMAFPS…VRQCSGVTFQ (306 aa)). A Glycyl lysine isopeptide (Lys-Gly) (interchain with G-Cter in ubiquitin) cross-link involves residue lysine 3268. Histidine 3304 serves as the catalytic For 3CL-PRO activity. Lysine 3353 participates in a covalent cross-link: Glycyl lysine isopeptide (Lys-Gly) (interchain with G-Cter in ubiquitin). Cysteine 3408 functions as the Nucleophile; for 3CL-PRO activity in the catalytic mechanism. Residues 3587–3607 (ILTSLLVLVQSTQWSLFFFLY) form a helical membrane-spanning segment. Glutamate 3608 is a topological domain (lumenal). A helical membrane pass occupies residues 3609-3629 (NAFLPFAMGIIAMSAFAMMFV). Residues 3630 to 3634 (KHKHA) are Cytoplasmic-facing. A helical membrane pass occupies residues 3635–3655 (FLCLFLLPSLATVAYFNMVYM). Residues 3656–3673 (PASWVMRIMTWLDMVDTS) lie on the Lumenal side of the membrane. Residues 3674–3694 (LSGFKLKDCVMYASAVVLLIL) form a helical membrane-spanning segment. Residues 3695–3729 (MTARTVYDDGARRVWTLMNVLTLVYKVYYGNALDQ) are Cytoplasmic-facing. Residues 3730 to 3750 (AISMWALIISVTSNYSGVVTT) form a helical membrane-spanning segment. The Lumenal segment spans residues 3751–3778 (VMFLARGIVFMCVEYCPIFFITGNTLQC). A helical transmembrane segment spans residues 3779 to 3799 (IMLVYCFLGYFCTCYFGLFCL). Topologically, residues 3800–7096 (LNRYFRLTLG…VISSDVLVNN (3297 aa)) are cytoplasmic. The RdRp Nsp7 cofactor domain maps to 3860 to 3942 (SKMSDVKCTS…EMLDNRATLQ (83 aa)). The disordered stretch occupies residues 3931 to 4020 (CEEMLDNRAT…QMYKQARSED (90 aa)). LRR repeat units lie at residues 3935–3959 (LDNR…AFAT) and 3977–4004 (LKKL…LEKM). Positions 3943-4140 (AIASEFSSLP…LRANSAVKLQ (198 aa)) constitute a RdRp Nsp8 cofactor domain. Positions 4141–4253 (NNELSPVALR…GSLAATVRLQ (113 aa)) constitute a Nsp9 ssRNA-binding domain. An ExoN/MTase coactivator domain is found at 4254 to 4392 (AGNATEVPAN…CDQLREPMLQ (139 aa)). Cysteine 4327, cysteine 4330, histidine 4336, cysteine 4343, cysteine 4370, cysteine 4373, cysteine 4381, and cysteine 4383 together coordinate Zn(2+). The NiRAN domain maps to 4399-4653 (FLNRVCGVSA…TAESHVDTDL (255 aa)). Residues 4591–4616 (AGIVGVLTLDNQDLNGNWYDFGDFIQ) form an LRR 7 repeat. The Mn(2+) site is built by asparagine 4601 and aspartate 4610. Residues 4658–4756 (IKWDLLKYDF…HNQDVNLHSS (99 aa)) form the Nsp12 Interface domain. The Zn(2+) site is built by histidine 4687, cysteine 4693, cysteine 4698, cysteine 4702, and cysteine 4879. The region spanning 4757 to 5324 (RLSFKELLVY…AMYTPHTVLQ (568 aa)) is the Nsp12 RNA-dependent RNA polymerase domain. The interval 4759-4973 (SFKELLVYAA…HQKLLKSIAA (215 aa)) is rdRp Fingers N-ter. The interval 4937-4947 (KYAISAKNRAR) is interaction with RMP Remdesivir. The segment at 4974-5012 (TRGATVVIGTSKFYGGWHNMLKTVYSDVENPHLMGWDYP) is rdRp Palm N-ter. The RdRp catalytic domain maps to 5004–5166 (PHLMGWDYPK…CFNSTYASQG (163 aa)). The interval 5013-5071 (KCDRAMPNMLRIMASLVLARKHTTCCSLSHRFYRLANECAQVLSEMVMCGGSLYVKPGG) is rdRp Fingers C-ter. Zn(2+)-binding residues include histidine 5034, cysteine 5037, and cysteine 5038. A rdRp Palm C-ter region spans residues 5072–5207 (TSSGDATTAY…TKGPHEFCSQ (136 aa)). Residues serine 5151, aspartate 5152, and aspartate 5153 contribute to the active site. A rdRp Thumb region spans residues 5208-5324 (HTMLVKQGDD…AMYTPHTVLQ (117 aa)). Positions 5325–5437 (AVGACVLCNS…TDFNAIATCD (113 aa)) constitute a CV ZBD domain. Residues cysteine 5329, cysteine 5332, cysteine 5340, cysteine 5343, cysteine 5350, cysteine 5353, histidine 5357, histidine 5363, cysteine 5374, cysteine 5379, cysteine 5396, and histidine 5399 each coordinate Zn(2+). Residues 5552–5572 (TSHTVMPLSAPTLVPQEHYVR) form an LRR 8 repeat. The region spanning 5581-5762 (NISDEFSSNV…MKTIGPDMFL (182 aa)) is the (+)RNA virus helicase ATP-binding domain. Residue 5606–5613 (GPPGTGKS) coordinates a ribonucleoside 5'-triphosphate. Residues 5763–5932 (GTCRRCPAEI…TLQAENVTGL (170 aa)) enclose the (+)RNA virus helicase C-terminal domain. The ExoN domain maps to 5997 to 6212 (MFITREEAIR…RCLAVHECFV (216 aa)). Residues aspartate 6015, glutamate 6017, and glutamate 6116 contribute to the active site. Aspartate 6015, glutamate 6017, and glutamate 6116 together coordinate Mg(2+). Cysteine 6132, cysteine 6135, cysteine 6151, histidine 6154, histidine 6182, cysteine 6186, and histidine 6189 together coordinate Zn(2+). Active-site residues include histidine 6193 and aspartate 6198. Mg(2+)-binding residues include histidine 6193 and aspartate 6198. A Zn(2+)-binding site is contributed by cysteine 6204. Residues 6221-6452 (YPIIGDELKI…NLWNTFTRLQ (232 aa)) enclose the N7-MTase domain. 6256–6262 (DIGNPKA) serves as a coordination point for S-adenosyl-L-methionine. A gpppA-binding region spans residues 6339-6353 (CDGGSLYVNKHAFHT). Zn(2+) contacts are provided by cysteine 6377, cysteine 6402, cysteine 6409, and histidine 6412. The region spanning 6453-6513 (SLENVAFNVV…NVAFELWAKR (61 aa)) is the Nsp15 N-terminal oligomerization domain. Residues 6514–6639 (NIKPVPEVKI…YYKKVDGVVQ (126 aa)) enclose the AV-Nsp11N/CoV-Nsp15M domain. The region spanning 6656 to 6795 (KPRSQMEIDF…KDGHVETFYP (140 aa)) is the NendoU domain. Histidine 6686 acts as the Proton donor; for uridylate-specific endoribonuclease nsp15 activity in catalysis. Histidine 6701 functions as the Proton acceptor; for uridylate-specific endoribonuclease nsp15 activity in the catalytic mechanism. Residue lysine 6741 is the For uridylate-specific endoribonuclease nsp15 activity of the active site. Uracil-binding positions include 6741–6745 (KCVCS) and 6792–6796 (TFYPK). In terms of domain architecture, Nidovirus-type SAM-dependent 2'-O-MTase spans 6800-7094 (SQAWQPGVAM…RVVISSDVLV (295 aa)). One copy of the LRR 9 repeat lies at 6817–6841 (RMLLEKCDLQNYGDSATLPKGIMMN). Active-site residues include lysine 6844, aspartate 6928, lysine 6968, and glutamate 7001.

The protein belongs to the coronaviruses polyprotein 1ab family. In terms of assembly, interacts with host GIGYF2. May form homohexamers. Interacts with N protein. As to quaternary structure, 3CL-PRO exists as monomer and homodimer. Only the homodimer shows catalytic activity. Interacts with host FBXO22; this interaction promotes the proteasomal degradation of nsp5. In terms of assembly, interacts with PL-PRO and nsp6. Forms homodimers. Interacts with host ZFYVE1 (DFCP1), which leads to ER and DMVs binding to lipid droplets. Interacts with host TBK1; this interaction decreases IRF3 phosphorylation by 57%, which leads to reduced IFN-beta production. As to quaternary structure, interacts with nsp8 and nsp12 to form the replication-transcription complex (RTC): nsp12, nsp7, two subunits of nsp8, and up to two subunits of nsp13. Eight copies of nsp7 and eight copies of nsp8 assemble to form a heterohexadecamer dsRNA-encircling ring structure. In terms of assembly, interacts with nsp7, nsp13 and nsp12 to form the replication-transcription complex (RTC): nsp12, nsp7, two subunits of nsp8, and up to two subunits of nsp13. Eight copies of nsp7 and eight copies of nsp8 assemble to form a heterohexadecamer dsRNA-encircling ring structure. Is a dimer. Interacts with NSP12. Interacts with host SND1. As to quaternary structure, forms a dodecamer and interacts with nsp14 and nsp16; these interactions enhance nsp14 and nsp16 enzymatic activities. In terms of assembly, interacts with nsp7 and nsp8 to form the replication-transcription complex (RTC): nsp12, nsp7, two subunits of nsp8, and up to two subunits of nsp13. Interacts with nsp9. Interacts with nsp8 to form the replication-transcription complex (RTC): nsp12, nsp7, two subunits of nsp8, and up to two subunits of nsp13. Interacts with host TBK1; this interaction inhibits TBK1 phosphorylation and decreases by 75% IRF3 phosphorylation, which leads to reduced IFN-beta production. As to quaternary structure, interacts (via N-terminus) with DDX1. Interacts with nsp10. In terms of assembly, homohexamer. Interacts with nsp10. Mn(2+) is required as a cofactor. Mg(2+) serves as cofactor. In terms of processing, specific enzymatic cleavages in vivo by its own proteases yield mature proteins. 3CL-PRO and PL-PRO proteinases are autocatalytically processed.

The protein resides in the host cytoplasm. It is found in the host endosome. Its subcellular location is the host endoplasmic reticulum membrane. It localises to the host Golgi apparatus. The protein localises to the host nucleus. The protein resides in the host perinuclear region. It is found in the host endoplasmic reticulum. Its subcellular location is the host endoplasmic reticulum-Golgi intermediate compartment. It carries out the reaction RNA(n) + a ribonucleoside 5'-triphosphate = RNA(n+1) + diphosphate. It catalyses the reaction ATP + H2O = ADP + phosphate + H(+). The enzyme catalyses TSAVLQ-|-SGFRK-NH2 and SGVTFQ-|-GKFKK the two peptides corresponding to the two self-cleavage sites of the SARS 3C-like proteinase are the two most reactive peptide substrates. The enzyme exhibits a strong preference for substrates containing Gln at P1 position and Leu at P2 position.. The catalysed reaction is Thiol-dependent hydrolysis of ester, thioester, amide, peptide and isopeptide bonds formed by the C-terminal Gly of ubiquitin (a 76-residue protein attached to proteins as an intracellular targeting signal).. It carries out the reaction a 5'-end (N(7)-methyl 5'-triphosphoguanosine)-ribonucleoside in mRNA + S-adenosyl-L-methionine = a 5'-end (N(7)-methyl 5'-triphosphoguanosine)-(2'-O-methyl-ribonucleoside) in mRNA + S-adenosyl-L-homocysteine + H(+). It catalyses the reaction uridylyl-uridylyl-ribonucleotide-RNA = a 3'-end uridylyl-2',3'-cyclophospho-uridine-RNA + a 5'-end dephospho-ribonucleoside-RNA. The enzyme catalyses a 5'-end diphospho-ribonucleoside in mRNA + GTP + H(+) = a 5'-end (5'-triphosphoguanosine)-ribonucleoside in mRNA + diphosphate. The catalysed reaction is a 5'-end (5'-triphosphoguanosine)-ribonucleoside in mRNA + S-adenosyl-L-methionine = a 5'-end (N(7)-methyl 5'-triphosphoguanosine)-ribonucleoside in mRNA + S-adenosyl-L-homocysteine. Inhibited in vitro by GRL-0617. With respect to regulation, inhibited ex vivo by K22. It may shift NSP6 zippering activity towards the nuclear envelope, thereby impairing formation of the NSP6-compartment necessary for viral transcription/replication. Its activity is regulated as follows. Inhibited by Remdesivir antiviral drug (GS-5734). Inhibited by Remdesivir antiviral drug (GS-5734) through non-obligate RNA chain termination. With respect to regulation, inhibited by pyridone-containing alpha-ketoamides compounds 13a and 13b. In turn, alpha-ketoamide 13b (tert-butyl (1-((S)-1-(((S)-4-(benzylamino)-3,4-dioxo-1-((S)-2-oxopyrrolidin-3-yl)butan-2-yl)amino)-3-cyclopropyl-1-oxopropan-2-yl)-2-oxo-1,2-dihydropyridin-3-yl)carbamate) inhibits SARS-CoV-2 replication in human lung cells. Inhibited ex vivo by michael acceptor inhibitor N3. Inhibited ex vivo by compound 11a and 11b. Functionally, multifunctional protein involved in the transcription and replication of viral RNAs. Contains the proteinases responsible for the cleavages of the polyprotein. Its function is as follows. Inhibits host translation by associating with the open head conformation of the 40S subunit. The C-terminus binds to and obstructs ribosomal mRNA entry tunnel. Thereby inhibits antiviral response triggered by innate immunity or interferons. The nsp1-40S ribosome complex further induces an endonucleolytic cleavage near the 5'UTR of host mRNAs, targeting them for degradation. This inhibits the integrated stress response (ISR) in the infected cell by preventing EIF2S1/eIF2-alpha phosphorylation upstream of stress granule formation and depletes host G3BP1. Viral mRNAs less susceptible to nsp1-mediated inhibition of translation, because of their 5'-end leader sequence. In terms of biological role, enhances mRNA repression of the 4EHP-GYF2 complex in the host, thereby inhibiting the antiviral response and facilitating SARS-CoV-2 replication. Possibly acts in cooperation with nsp1, which induces ribosome stalling on host mRNA, triggering mRNA repression by the host 4EHP-GYF2 complex which is enhanced by nsp2. Responsible for the cleavages located at the N-terminus of the replicase polyprotein. Participates together with nsp4 in the assembly of virally-induced cytoplasmic double-membrane vesicles necessary for viral replication. Antagonizes innate immune induction of type I interferon by blocking the phosphorylation, dimerization and subsequent nuclear translocation of host IRF3. Also prevents host NF-kappa-B signaling. In addition, PL-PRO possesses a deubiquitinating/deISGylating activity and processes both 'Lys-48'- and 'Lys-63'-linked polyubiquitin chains from cellular substrates. Cleaves preferentially ISG15 from antiviral protein IFIH1 (MDA5), but not RIGI. Can play a role in host ADP-ribosylation by ADP-ribose. Plays a role in the formation and maintenance of double membrane vesicles (DMVs) replication organelles. DMVs are formed by nsp3 and nsp4, while nsp6 zippers ER membranes and connects to lipid droplets. Functionally, plays a role in the formation and maintenance of double membrane vesicles (DMVs) replication organelles. DMVs are formed by nsp3 and nsp4, while nsp6 zippers ER membranes and connects to lipid droplets. Its function is as follows. Cleaves the C-terminus of replicase polyprotein at 11 sites. Recognizes substrates containing the core sequence [ILMVF]-Q-|-[SGACN]. Cleaves and inactivates human TRMT1, preventing tRNA guanine(26)-dimethylation of tRNAs. May cleave human NLRP1 in lung epithelial cells, thereby activating the NLRP1 inflammasome pathway. May cleave human GSDMD, triggering alternative GSDME-mediated epithelial cell death upon activation of the NLRP1 inflammasome, which may enhance the release interleukins 1B, 6, 16 and 18. Also able to bind an ADP-ribose-1''-phosphate (ADRP). In terms of biological role, plays a role in the formation and maintenance of double membrane vesicles (DMVs) replication organelles. DMVs are formed by nsp3 and nsp4, while nsp6 zippers ER membranes and connects to lipid droplets. LDs are consumed during DMV formation. Binds to host TBK1 without affecting TBK1 phosphorylation; the interaction with TBK1 decreases IRF3 phosphorylation, which leads to reduced IFN-beta production. Plays a role in viral RNA synthesis. Forms a hexadecamer with nsp8 (8 subunits of each) that may participate in viral replication by acting as a primase. Alternatively, may synthesize substantially longer products than oligonucleotide primers. Functionally, plays a role in viral RNA synthesis. Forms a hexadecamer with nsp7 (8 subunits of each) that may participate in viral replication by acting as a primase. Alternatively, may synthesize substantially longer products than oligonucleotide primers. Interacts with ribosome signal recognition particle RNA (SRP). Together with NSP9, suppress protein integration into the cell membrane, thereby disrupting host immune defenses. Its function is as follows. Forms a primer, NSP9-pU, which is utilized by the polymerase for the initiation of RNA chains. Interacts with ribosome signal recognition particle RNA (SRP). Together with NSP8, suppress protein integration into the cell membrane, thereby disrupting host immune defenses. In terms of biological role, plays a pivotal role in viral transcription by stimulating both nsp14 3'-5' exoribonuclease and nsp16 2'-O-methyltransferase activities. Therefore plays an essential role in viral mRNAs cap methylation. RNA-directed RNA polymerase that catalyzes the transcription of viral genomic and subgenomic RNAs. Acts in complex with nsp7 and nsp8 to transcribe both the minus and positive strands of genomic RNA. The kinase-like NiRAN domain of NSP12 attaches one or more nucleotides to the amino terminus of NSP9, forming a covalent RNA-protein intermediate that serves as transcription/replication primer. Subgenomic RNAs (sgRNAs) are formed by discontinuous transcription: The polymerase has the ability to pause at transcription-regulating sequences (TRS) and jump to the leader TRS, resulting in a major deletion. This creates a series of subgenomic RNAs that are replicated, transcribed and translated. In addition, Nsp12 is a subunit of the viral RNA capping enzyme that catalyzes the RNA guanylyltransferase reaction for genomic and sub-genomic RNAs. Subsequently, the NiRAN domain transfers RNA to GDP, and forms the core cap structure GpppA-RNA. Functionally, plays a role in viral RNA synthesis. Multi-functional protein with a zinc-binding domain in N-terminus displaying RNA and DNA duplex-unwinding activities with 5' to 3' polarity. Activity of helicase is dependent on magnesium. Binds to host TBK1 and inhibits TBK1 phosphorylation; the interaction with TBK1 decreases IRF3 phosphorylation, which leads to reduced IFN-beta production. Its function is as follows. Plays a role in viral RNA synthesis through two distinct activities. The N7-guanine methyltransferase activity plays a role in the formation of the cap structure GpppA-RNA. The proofreading exoribonuclease reduces the sensitivity of the virus to RNA mutagens during replication. This activity acts on both ssRNA and dsRNA in a 3'-5' direction. In terms of biological role, plays a role in viral transcription/replication and prevents the simultaneous activation of host cell dsRNA sensors, such as MDA5/IFIH1, OAS, and PKR. Acts by degrading the 5'-polyuridines generated during replication of the poly(A) region of viral genomic and subgenomic RNAs. Catalyzes a two-step reaction in which a 2'3'-cyclic phosphate (2'3'-cP) is first generated by 2'-O transesterification, which is then hydrolyzed to a 3'-phosphate (3'-P). If not degraded, poly(U) RNA would hybridize with poly(A) RNA tails and activate host dsRNA sensors. May bind genomic dsRNA in association with the replication-transcription complex (RTC), and play a role in nsp12 discontinous transcription. Methyltransferase that mediates mRNA cap 2'-O-ribose methylation to the 5'-cap structure of viral mRNAs. N7-methyl guanosine cap is a prerequisite for binding of nsp16. Therefore, it plays an essential role in cap methylation of viral mRNAs, which is essential to evade the immune system, especially when restricted by human IFIT1 and IFIT3. May disrupt host mRNA splicing in nucleus by interacting with pre-mRNA Recognition Domains of the U1 and U2 snRNAs. This chain is Replicase polyprotein 1ab (rep), found in Homo sapiens (Human).